The primary structure comprises 311 residues: MDGNYTLVTEFILLGFPTRPELQIVLFLVFLTLYGIILTGNIGLMMLIRTDPHLQTPMYFFLSNLSFADLCFSSAIVPKMLVNFLSENKSISLYGCALQFYFSCAFADTESFILAAMAYDRYVAICNPLLYTVVMSRGICVWLIVLSYIGGNMSSLVHTSFAFILKYCDKNVINHFFCDLPPLLKLSCTDTSVNEWLLSTYGSSVEIFCFIVIVISYYFILRSVLRIRSSSGRKKTFSTCASHLTSVAIYQGTLLFIYSRPTYLYTPNTDKIISVFYTIIIPVLNPLIYSLRNKDVKDAAKRAVRLKVDSS.

The Extracellular portion of the chain corresponds to 1 to 24 (MDGNYTLVTEFILLGFPTRPELQI). A glycan (N-linked (GlcNAc...) asparagine) is linked at asparagine 4. A helical membrane pass occupies residues 25 to 48 (VLFLVFLTLYGIILTGNIGLMMLI). Over 49-56 (RTDPHLQT) the chain is Cytoplasmic. The helical transmembrane segment at 57–78 (PMYFFLSNLSFADLCFSSAIVP) threads the bilayer. Residues 79–99 (KMLVNFLSENKSISLYGCALQ) are Extracellular-facing. Residues 100-119 (FYFSCAFADTESFILAAMAY) form a helical membrane-spanning segment. Topologically, residues 120-138 (DRYVAICNPLLYTVVMSRG) are cytoplasmic. A helical membrane pass occupies residues 139 to 157 (ICVWLIVLSYIGGNMSSLV). Residues 158-195 (HTSFAFILKYCDKNVINHFFCDLPPLLKLSCTDTSVNE) lie on the Extracellular side of the membrane. Residues 196–218 (WLLSTYGSSVEIFCFIVIVISYY) form a helical membrane-spanning segment. The Cytoplasmic portion of the chain corresponds to 219 to 235 (FILRSVLRIRSSSGRKK). The helical transmembrane segment at 236-259 (TFSTCASHLTSVAIYQGTLLFIYS) threads the bilayer. Topologically, residues 260-271 (RPTYLYTPNTDK) are extracellular. A helical membrane pass occupies residues 272 to 291 (IISVFYTIIIPVLNPLIYSL). Residues 292-311 (RNKDVKDAAKRAVRLKVDSS) lie on the Cytoplasmic side of the membrane.

Belongs to the G-protein coupled receptor 1 family.

It localises to the cell membrane. Putative odorant or sperm cell receptor. In Canis lupus familiaris (Dog), this protein is Olfactory receptor-like protein OLF1.